We begin with the raw amino-acid sequence, 161 residues long: Gamma-glutamylaminecyclotransferase A (161 aa).

26-29 (YGTL) serves as a coordination point for substrate. Glu-101 (proton acceptor) is an active-site residue.

The protein belongs to the gamma-glutamylcyclotransferase family.

The catalysed reaction is epsilon-(gamma-L-glutamyl)-L-lysine = 5-oxo-L-proline + L-lysine. In terms of biological role, may contribute to degradation of proteins cross-linked by transglutaminases by degrading the cross-link between a lysine and a glutamic acid residue. Catalyzes the formation of 5-oxo-L-proline from L-gamma-glutamyl-L-epsilon-lysine. This chain is Gamma-glutamylaminecyclotransferase A (ggact.1), found in Danio rerio (Zebrafish).